An 878-amino-acid polypeptide reads, in one-letter code: Bifunctional heparan sulfate N-deacetylase/N-sulfotransferase 1 (878 aa).

Over 1–17 the chain is Cytoplasmic; sequence MSLSLKTRRFGRPVRPQ. Residues 1–169 are sufficient for localization to Golgi membrane; that stretch reads MSLSLKTRRF…VEYGVGIIGF (169 aa). The chain crosses the membrane as a helical; Signal-anchor for type II membrane protein span at residues 18 to 38; it reads LVLLLLFALCLLSVFISAYYL. The Lumenal portion of the chain corresponds to 39–878; that stretch reads YGWKRGLEPS…WLREELQNTR (840 aa). The interval 40–594 is heparan sulfate N-deacetylase 1; the sequence is GWKRGLEPSG…KRHKDIWSKE (555 aa). N-linked (GlcNAc...) asparagine glycans are attached at residues asparagine 231, asparagine 347, and asparagine 397. Residues 595–878 are heparan sulfate N-sulfotransferase 1; the sequence is KTCDRFPKLL…WLREELQNTR (284 aa). Residue lysine 610 is the For sulfotransferase activity of the active site. 610–614 is a binding site for adenosine 3',5'-bisphosphate; that stretch reads KTGTT. Asparagine 663 carries an N-linked (GlcNAc...) asparagine glycan. Adenosine 3',5'-bisphosphate is bound by residues serine 708 and tryptophan 813. Cysteine 814 and cysteine 824 are disulfide-bonded. 829–833 is a binding site for adenosine 3',5'-bisphosphate; sequence KGRKY.

This sequence belongs to the sulfotransferase 1 family. NDST subfamily. As to quaternary structure, monomer.

The protein resides in the golgi apparatus membrane. It is found in the golgi apparatus. Its subcellular location is the trans-Golgi network membrane. It carries out the reaction alpha-D-glucosaminyl-[heparan sulfate](n) + 3'-phosphoadenylyl sulfate = N-sulfo-alpha-D-glucosaminyl-[heparan sulfate](n) + adenosine 3',5'-bisphosphate + 2 H(+). It functions in the pathway glycan metabolism; heparan sulfate biosynthesis. It participates in glycan metabolism; heparin biosynthesis. Essential bifunctional enzyme that catalyzes both the N-deacetylation and the N-sulfation of glucosamine (GlcNAc) of the glycosaminoglycan in heparan sulfate. Modifies the GlcNAc-GlcA disaccharide repeating sugar backbone to make N-sulfated heparosan, a prerequisite substrate for later modifications in heparin biosynthesis. Plays a role in determining the extent and pattern of sulfation of heparan sulfate. This chain is Bifunctional heparan sulfate N-deacetylase/N-sulfotransferase 1 (ndst1), found in Xenopus laevis (African clawed frog).